The following is a 478-amino-acid chain: D-ribulose kinase (478 aa).

A chloroplast-targeting transit peptide spans 1–38; sequence MLILRQFQISSFELFQSPKQTGFYSSSRSVPLPRTRFY. Substrate is bound by residues Asp60, 64–67, and Asp278; that span reads SGGR. ATP contacts are provided by residues Ser300, Gly338, and 433 to 437; that span reads GGAKN.

The protein belongs to the FGGY kinase family. A divalent metal cation is required as a cofactor.

The protein resides in the plastid. It is found in the chloroplast. The catalysed reaction is D-ribulose + ATP = D-ribulose 5-phosphate + ADP + H(+). Functionally, exhibits ATP hydrolysis without substrate. Can phosphorylate D-ribulose with low efficiency. This is D-ribulose kinase from Arabidopsis thaliana (Mouse-ear cress).